Consider the following 124-residue polypeptide: Small ribosomal subunit protein bS6 (124 aa).

It belongs to the bacterial ribosomal protein bS6 family.

Functionally, binds together with bS18 to 16S ribosomal RNA. The chain is Small ribosomal subunit protein bS6 from Chromobacterium violaceum (strain ATCC 12472 / DSM 30191 / JCM 1249 / CCUG 213 / NBRC 12614 / NCIMB 9131 / NCTC 9757 / MK).